Here is a 340-residue protein sequence, read N- to C-terminus: CRISPR system Cmr subunit Cmr6 (340 aa).

The protein belongs to the CRISPR system Cmr6 family. In terms of assembly, part of the type III-B Cmr ribonucleoprotein (RNP) complex, an elongated RNP with Cmr2 and Cmr3 as the base, with Cmr4 and Cmr5 forming a helical core along the mature crRNA (39 or 45 nt in length), while the complex is capped by Cmr6 and Cmr1. The 5' end of the crRNA is bound to Cmr2 and Cmr3, while Cmr6 and a Cmr1 subunit (Cmr1-1 or Cmr1-2) cap the 3' end of the crRNA. The target RNA lies antiparallel to the crRNA, with its 5' end near Cmr1 and Cmr6 and its 3' end near Cmr2 and Cmr3; major target cleavage occurs nears the junction of Cmr1/Cmr6 and Cmr4/Cmr, with minor cleavage occurring at 6 nt intervals which coincide with the proposed spacing of Cmr4 subunits. Interacts with Cmr4 and Cmr5.

Its subcellular location is the cytoplasm. CRISPR (clustered regularly interspaced short palindromic repeat), is an adaptive immune system that provides protection against mobile genetic elements (viruses, transposable elements and conjugative plasmids). CRISPR clusters contain sequences complementary to antecedent mobile elements and target invading nucleic acids. CRISPR clusters are transcribed and processed into CRISPR RNA (crRNA), formerly called psiRNA (prokaryotic silencing) in this organism. Part of the Cmr ribonucleoprotein complex which has divalent cation-dependent endoribonuclease activity specific for ssRNA complementary to the crRNA (target RNA), generating 5' hydroxy- and 3' phosphate or 2'-3' cyclic phosphate termini. Cmr4 is probably the subunit that cleaves target RNA. Cmr complex does not cleave ssDNA complementary to the crRNA. Cleavage of invading RNA is guided by the crRNA; substrate cleavage occurs a fixed distance (14 nt) from the 3' end of the crRNA. In vitro reconstitution shows Cmr1-2 and Cmr5 are not absolutely necessary for target cleavage. The sequence is that of CRISPR system Cmr subunit Cmr6 from Pyrococcus furiosus (strain ATCC 43587 / DSM 3638 / JCM 8422 / Vc1).